A 163-amino-acid polypeptide reads, in one-letter code: uncharacterized protein (163 aa).

This is an uncharacterized protein from Rickettsia conorii (strain ATCC VR-613 / Malish 7).